The chain runs to 262 residues: Hydroxyethylthiazole kinase (262 aa).

A substrate-binding site is contributed by Met44. Residues Arg118 and Thr166 each contribute to the ATP site. Position 193 (Gly193) interacts with substrate.

Belongs to the Thz kinase family. Requires Mg(2+) as cofactor.

The catalysed reaction is 5-(2-hydroxyethyl)-4-methylthiazole + ATP = 4-methyl-5-(2-phosphooxyethyl)-thiazole + ADP + H(+). Its pathway is cofactor biosynthesis; thiamine diphosphate biosynthesis; 4-methyl-5-(2-phosphoethyl)-thiazole from 5-(2-hydroxyethyl)-4-methylthiazole: step 1/1. In terms of biological role, catalyzes the phosphorylation of the hydroxyl group of 4-methyl-5-beta-hydroxyethylthiazole (THZ). The protein is Hydroxyethylthiazole kinase of Chlamydia felis (strain Fe/C-56) (Chlamydophila felis).